The following is a 556-amino-acid chain: 2-isopropylmalate synthase (556 aa).

Residues 33–307 form the Pyruvate carboxyltransferase domain; sequence PIWCSSDLRD…HPQLDFSDID (275 aa). Mg(2+) is bound by residues Asp-42, His-246, His-248, and Asn-282. A regulatory domain region spans residues 439–556; sequence ATSPYALASH…AVTQAEAKAA (118 aa).

It belongs to the alpha-IPM synthase/homocitrate synthase family. LeuA type 2 subfamily. In terms of assembly, homodimer. Mg(2+) is required as a cofactor.

Its subcellular location is the cytoplasm. The catalysed reaction is 3-methyl-2-oxobutanoate + acetyl-CoA + H2O = (2S)-2-isopropylmalate + CoA + H(+). The protein operates within amino-acid biosynthesis; L-leucine biosynthesis; L-leucine from 3-methyl-2-oxobutanoate: step 1/4. Functionally, catalyzes the condensation of the acetyl group of acetyl-CoA with 3-methyl-2-oxobutanoate (2-ketoisovalerate) to form 3-carboxy-3-hydroxy-4-methylpentanoate (2-isopropylmalate). The chain is 2-isopropylmalate synthase from Pseudomonas paraeruginosa (strain DSM 24068 / PA7) (Pseudomonas aeruginosa (strain PA7)).